The chain runs to 234 residues: Thymidylate kinase (234 aa).

Position 10–17 (10–17) interacts with ATP; it reads GGEGSGKT.

Belongs to the thymidylate kinase family.

The catalysed reaction is dTMP + ATP = dTDP + ADP. Functionally, phosphorylation of dTMP to form dTDP in both de novo and salvage pathways of dTTP synthesis. This Cyanothece sp. (strain PCC 7425 / ATCC 29141) protein is Thymidylate kinase.